Consider the following 1339-residue polypeptide: DNA polymerase alpha catalytic subunit (1339 aa).

Disordered regions lie at residues 1 to 90 (MSGG…SMSD) and 177 to 203 (NVERDQSAKPPRPRPTPGAGGGAGYRN). Residues 27-36 (DQWRSLREEV) show a composition bias toward basic and acidic residues. Positions 79 to 89 (PKQQTLAQSMS) are enriched in polar residues. Zn(2+)-binding residues include Cys-1179, Cys-1182, Cys-1213, Cys-1216, Cys-1233, Cys-1243, Cys-1271, and Cys-1286. The segment at 1179–1216 (CTHCRLMTPINPHTRVMEVLADQERQRDRFDLYVCVSC) adopts a CysA-type zinc-finger fold. Residues 1243 to 1271 (CGSAAAVKAVRTQFTYYRALFDVPHAPGC) carry the CysB motif motif.

The protein belongs to the DNA polymerase type-B family.

The protein localises to the nucleus. The enzyme catalyses DNA(n) + a 2'-deoxyribonucleoside 5'-triphosphate = DNA(n+1) + diphosphate. Functionally, polymerase alpha in a complex with DNA primase is a replicative polymerase. The chain is DNA polymerase alpha catalytic subunit from Leishmania donovani.